A 74-amino-acid polypeptide reads, in one-letter code: UPF0248 protein MK0350 (74 aa).

It belongs to the UPF0248 family.

This Methanopyrus kandleri (strain AV19 / DSM 6324 / JCM 9639 / NBRC 100938) protein is UPF0248 protein MK0350.